The primary structure comprises 213 residues: Validoxylamine A 7'-phosphate phosphatase (213 aa).

The active-site Nucleophile is the D8. A divalent metal cation-binding residues include D8 and D10. Substrate-binding positions include 8–10, 107–108, and K140; these read DLD and TS. The active-site Proton donor is D10. An a divalent metal cation-binding site is contributed by D165.

It belongs to the HAD-like hydrolase superfamily. CbbY/CbbZ/Gph/YieH family. The cofactor is Mg(2+). It depends on Mn(2+) as a cofactor. Co(2+) serves as cofactor.

It carries out the reaction validoxylamine A 7'-phosphate + H2O = validoxylamine A + phosphate. Involved in the biosynthesis of the antifungal agent validamycin A. Catalyzes the dephosphorylation of validoxylamine A 7'-phosphate to yield validoxylamine A. VldH is also able to convert trehalose 6-phosphate to trehalose. The polypeptide is Validoxylamine A 7'-phosphate phosphatase (Streptomyces hygroscopicus subsp. limoneus).